The chain runs to 467 residues: Protein CitXG (467 aa).

Positions 1–178 (MDYFEGGERL…NKMLHNFEKS (178 aa)) are apo-citrate lyase phosphoribosyl-dephospho-CoA transferase. Residues 179–467 (KMIVPQMTQS…IFLARLVGSL (289 aa)) form a 2-(5''-triphosphoribosyl)-3'-dephosphocoenzyme-A synthase region.

This sequence in the N-terminal section; belongs to the CitX family. The protein in the C-terminal section; belongs to the CitG/MdcB family.

The catalysed reaction is apo-[citrate lyase ACP] + 2'-(5''-triphospho-alpha-D-ribosyl)-3'-dephospho-CoA = holo-[citrate lyase ACP] + diphosphate. It carries out the reaction 3'-dephospho-CoA + ATP = 2'-(5''-triphospho-alpha-D-ribosyl)-3'-dephospho-CoA + adenine. Functionally, bifunctional enzyme that catalyzes formation of 2-(5''-triphosphoribosyl)-3'-dephosphocoenzyme-A, and then the transfer of this prosthetic group precursor to the apo-acyl carrier protein (gamma chain) of the citrate lyase to yield the holo-acyl carrier protein. The polypeptide is Protein CitXG (citXG) (Leuconostoc mesenteroides subsp. cremoris).